The following is a 162-amino-acid chain: MGIRDAAYPGSFDPITFGHVNIVKRSIERFDNLYVVVVNNPNKKYLFSLQERIEMVKKDLEDIPNVIVESFDGLLVNYLKEKKIYNLIRGLRAVSDYEYELQMANANHMLFPQLEIFFLMADTDFSYISSSMIKEIASYNGDVSKWVSKFVELKLKEKLLKK.

S11 contacts substrate. Residues 11–12 and H19 each bind ATP; that span reads SF. Substrate contacts are provided by K43, L75, and R89. ATP-binding positions include 90–92, E100, and 125–131; these read GLR and FSYISSS.

Belongs to the bacterial CoaD family. In terms of assembly, homohexamer. Mg(2+) is required as a cofactor.

It localises to the cytoplasm. The enzyme catalyses (R)-4'-phosphopantetheine + ATP + H(+) = 3'-dephospho-CoA + diphosphate. The protein operates within cofactor biosynthesis; coenzyme A biosynthesis; CoA from (R)-pantothenate: step 4/5. Its function is as follows. Reversibly transfers an adenylyl group from ATP to 4'-phosphopantetheine, yielding dephospho-CoA (dPCoA) and pyrophosphate. The polypeptide is Phosphopantetheine adenylyltransferase (Petrotoga mobilis (strain DSM 10674 / SJ95)).